Consider the following 233-residue polypeptide: uncharacterized protein (233 aa).

The tract at residues 190-233 is disordered; the sequence is LNTSLSEDDTESIVETDYSEEEKESISETESSSDDESYSLYDSF. The segment covering 195-212 has biased composition (acidic residues); it reads SEDDTESIVETDYSEEEK.

Belongs to the asfivirus DP238L family.

This is an uncharacterized protein from Ornithodoros (relapsing fever ticks).